We begin with the raw amino-acid sequence, 85 residues long: MGSVVAILRVMPESPDIDLEKLKKALKDALPGIKDIQEEPIGFGLKALKLAAIVNDAGGETDALEGKLNAVPGVERAEIIEVTLN.

Belongs to the EF-1-beta/EF-1-delta family.

Promotes the exchange of GDP for GTP in EF-1-alpha/GDP, thus allowing the regeneration of EF-1-alpha/GTP that could then be used to form the ternary complex EF-1-alpha/GTP/AAtRNA. The sequence is that of Elongation factor 1-beta from Methanoregula boonei (strain DSM 21154 / JCM 14090 / 6A8).